Reading from the N-terminus, the 300-residue chain is Cysteine-rich venom protein (300 aa).

The signal sequence occupies residues 1-21 (MLSTMQTVGAVLMLSIVLVAG). Residues 22-24 (RKR) constitute a propeptide that is removed on maturation. Positions 62–183 (LEMHNKIRAD…GNNKYFVCNY (122 aa)) constitute an SCP domain.

In terms of processing, contains 11 disulfide bonds. In terms of tissue distribution, expressed by the venom duct.

It is found in the secreted. Protease responsible for cleaving the conotoxins from their propeptide precursors. The target propeptide requires minimum four residues including a leucine N-terminal of the cleavage site for efficient substrate processing (example: Xaa-Xaa-Xaa-Leu-Asn-Lys-Arg-toxin). The polypeptide is Cysteine-rich venom protein (Conus textile (Cloth-of-gold cone)).